The primary structure comprises 632 residues: tRNA uridine 5-carboxymethylaminomethyl modification enzyme MnmG (632 aa).

Residues glycine 15–glycine 20, isoleucine 127, and serine 182 each bind FAD. Position 276–290 (glycine 276–phenylalanine 290) interacts with NAD(+). Residue glutamine 373 participates in FAD binding.

Belongs to the MnmG family. In terms of assembly, homodimer. Heterotetramer of two MnmE and two MnmG subunits. FAD serves as cofactor.

It localises to the cytoplasm. Functionally, NAD-binding protein involved in the addition of a carboxymethylaminomethyl (cmnm) group at the wobble position (U34) of certain tRNAs, forming tRNA-cmnm(5)s(2)U34. The protein is tRNA uridine 5-carboxymethylaminomethyl modification enzyme MnmG of Streptococcus pyogenes serotype M1.